The following is a 377-amino-acid chain: UDP-N-acetylglucosamine 2-epimerase (377 aa).

The active site involves His212.

This sequence belongs to the UDP-N-acetylglucosamine 2-epimerase family. Homodimer.

It carries out the reaction UDP-N-acetyl-alpha-D-glucosamine + H2O = aldehydo-N-acetyl-D-mannosamine + UDP + H(+). Functionally, catalyzes the conversion of UDP-N-acetylglucosamine (UDP-GlcNAc) to UDP and N-acetyl-D-mannosamine (ManNAc). This chain is UDP-N-acetylglucosamine 2-epimerase (siaA), found in Neisseria meningitidis serogroup B (strain ATCC BAA-335 / MC58).